The sequence spans 120 residues: Large ribosomal subunit protein uL18 (120 aa).

The interval 1 to 26 is disordered; the sequence is MKLTRRESKQRRHRRVRGKVQGSPER. Residues 8–18 are compositionally biased toward basic residues; that stretch reads SKQRRHRRVRG.

This sequence belongs to the universal ribosomal protein uL18 family. Part of the 50S ribosomal subunit; part of the 5S rRNA/L5/L18/L25 subcomplex. Contacts the 5S and 23S rRNAs.

In terms of biological role, this is one of the proteins that bind and probably mediate the attachment of the 5S RNA into the large ribosomal subunit, where it forms part of the central protuberance. In Trichormus variabilis (strain ATCC 29413 / PCC 7937) (Anabaena variabilis), this protein is Large ribosomal subunit protein uL18.